The chain runs to 115 residues: Large ribosomal subunit protein bL19 (115 aa).

This sequence belongs to the bacterial ribosomal protein bL19 family.

Functionally, this protein is located at the 30S-50S ribosomal subunit interface and may play a role in the structure and function of the aminoacyl-tRNA binding site. This Nitratidesulfovibrio vulgaris (strain ATCC 29579 / DSM 644 / CCUG 34227 / NCIMB 8303 / VKM B-1760 / Hildenborough) (Desulfovibrio vulgaris) protein is Large ribosomal subunit protein bL19.